We begin with the raw amino-acid sequence, 292 residues long: 4-hydroxy-tetrahydrodipicolinate synthase 2 (292 aa).

Threonine 46 is a binding site for pyruvate. The active-site Proton donor/acceptor is tyrosine 134. Catalysis depends on lysine 162, which acts as the Schiff-base intermediate with substrate. A pyruvate-binding site is contributed by valine 204.

This sequence belongs to the DapA family. Homotetramer; dimer of dimers.

It is found in the cytoplasm. It catalyses the reaction L-aspartate 4-semialdehyde + pyruvate = (2S,4S)-4-hydroxy-2,3,4,5-tetrahydrodipicolinate + H2O + H(+). Its pathway is amino-acid biosynthesis; L-lysine biosynthesis via DAP pathway; (S)-tetrahydrodipicolinate from L-aspartate: step 3/4. Functionally, catalyzes the condensation of (S)-aspartate-beta-semialdehyde [(S)-ASA] and pyruvate to 4-hydroxy-tetrahydrodipicolinate (HTPA). The chain is 4-hydroxy-tetrahydrodipicolinate synthase 2 from Halalkalibacterium halodurans (strain ATCC BAA-125 / DSM 18197 / FERM 7344 / JCM 9153 / C-125) (Bacillus halodurans).